Consider the following 775-residue polypeptide: E3 ubiquitin-protein ligase UHRF1 (775 aa).

The 77-residue stretch at 1 to 77 (MWIQVRTMDG…IVQLLVRQIP (77 aa)) folds into the Ubiquitin-like domain. The interval 81-128 (PTKDKECGISDADSGCGSGQGESDKNSSCGEGATDVDGQPAGINSENV) is disordered. 2 tudor-like regions span residues 131-207 (SLYK…LRAR) and 214-283 (DLKV…IEEP). Positions 293–301 (PQKRQNGPE) are linker. The segment at 299–366 (GPECKHCKDN…DWYCPDCRND (68 aa)) adopts a PHD-type zinc-finger fold. Histone H3R2me0 binding regions lie at residues 333-337 (CDECD) and 353-355 (PQD). A YDG domain is found at 419–582 (GPIPGVPVGT…FLVWRYLLRR (164 aa)). A required to promote base flipping region spans residues 445–446 (HV). Residues 463 to 464 (AG) and aspartate 469 each bind DNA. Required for formation of a 5-methylcytosine-binding pocket stretches follow at residues 466 to 469 (YEDD) and 478 to 481 (YTGS). The segment covering 616–628 (ASKEREKENKTED) has biased composition (basic and acidic residues). Residues 616–655 (ASKEREKENKTEDELSESPSKGKRKRNSAGSGLSDAKSTP) are disordered. The segment at 706-745 (CICCQEVVYEPITTECHHNICKGCLDRSFKALVHNCPACR) adopts an RING-type zinc-finger fold.

The protein localises to the nucleus. The enzyme catalyses S-ubiquitinyl-[E2 ubiquitin-conjugating enzyme]-L-cysteine + [acceptor protein]-L-lysine = [E2 ubiquitin-conjugating enzyme]-L-cysteine + N(6)-ubiquitinyl-[acceptor protein]-L-lysine.. Its pathway is protein modification; protein ubiquitination. Functionally, multidomain protein that acts as a key epigenetic regulator by bridging DNA methylation and chromatin modification. Specifically recognizes and binds hemimethylated DNA at replication forks via its YDG domain and recruits dnmt1 methyltransferase to ensure faithful propagation of the DNA methylation patterns through DNA replication. In addition to its role in maintenance of DNA methylation, also plays a key role in chromatin modification: through its tudor-like regions and PHD-type zinc fingers, specifically recognizes and binds histone H3 trimethylated at 'Lys-9' (H3K9me3) and unmethylated at 'Arg-2' (H3R2me0), respectively, and recruits chromatin proteins. Enriched in pericentric heterochromatin where it recruits different chromatin modifiers required for this chromatin replication. Also localizes to euchromatic regions where it negatively regulates transcription possibly by impacting DNA methylation and histone modifications. Has E3 ubiquitin-protein ligase activity by mediating the ubiquitination of target proteins. However, it is still unclear how E3 ubiquitin-protein ligase activity is related to its role in chromatin in vivo. This Xenopus tropicalis (Western clawed frog) protein is E3 ubiquitin-protein ligase UHRF1 (uhrf1).